The primary structure comprises 514 residues: Peptide chain release factor 3 (514 aa).

Positions 8 to 268 (KKRRTFAIIS…TFLKFAPEPH (261 aa)) constitute a tr-type G domain. Residues 17–24 (SHPDAGKT), 85–89 (DTPGH), and 139–142 (NKLD) contribute to the GTP site.

This sequence belongs to the TRAFAC class translation factor GTPase superfamily. Classic translation factor GTPase family. PrfC subfamily.

The protein resides in the cytoplasm. Increases the formation of ribosomal termination complexes and stimulates activities of RF-1 and RF-2. It binds guanine nucleotides and has strong preference for UGA stop codons. It may interact directly with the ribosome. The stimulation of RF-1 and RF-2 is significantly reduced by GTP and GDP, but not by GMP. This is Peptide chain release factor 3 from Streptococcus pneumoniae (strain Hungary19A-6).